A 416-amino-acid chain; its full sequence is Gamma-glutamyl phosphate reductase (416 aa).

Belongs to the gamma-glutamyl phosphate reductase family.

The protein resides in the cytoplasm. The catalysed reaction is L-glutamate 5-semialdehyde + phosphate + NADP(+) = L-glutamyl 5-phosphate + NADPH + H(+). It participates in amino-acid biosynthesis; L-proline biosynthesis; L-glutamate 5-semialdehyde from L-glutamate: step 2/2. In terms of biological role, catalyzes the NADPH-dependent reduction of L-glutamate 5-phosphate into L-glutamate 5-semialdehyde and phosphate. The product spontaneously undergoes cyclization to form 1-pyrroline-5-carboxylate. The polypeptide is Gamma-glutamyl phosphate reductase (Salmonella typhi).